We begin with the raw amino-acid sequence, 1032 residues long: uncharacterized protein (1032 aa).

Disordered stretches follow at residues 54–80 (NNNN…NNNN), 391–451 (QLQI…QTHL), and 884–934 (INNE…SKVK). Low complexity predominate over residues 884-907 (INNENNNENNNNYNGNINSNNNNN).

This is an uncharacterized protein from Dictyostelium discoideum (Social amoeba).